The sequence spans 328 residues: Beta-ketoacyl-[acyl-carrier-protein] synthase III (328 aa).

Residues Cys113 and His252 contribute to the active site. An ACP-binding region spans residues 253-257 (QANLR). Asn282 is an active-site residue.

Belongs to the thiolase-like superfamily. FabH family. In terms of assembly, homodimer.

The protein resides in the cytoplasm. The enzyme catalyses malonyl-[ACP] + acetyl-CoA + H(+) = 3-oxobutanoyl-[ACP] + CO2 + CoA. The protein operates within lipid metabolism; fatty acid biosynthesis. Its function is as follows. Catalyzes the condensation reaction of fatty acid synthesis by the addition to an acyl acceptor of two carbons from malonyl-ACP. Catalyzes the first condensation reaction which initiates fatty acid synthesis and may therefore play a role in governing the total rate of fatty acid production. Possesses both acetoacetyl-ACP synthase and acetyl transacylase activities. Its substrate specificity determines the biosynthesis of branched-chain and/or straight-chain of fatty acids. This is Beta-ketoacyl-[acyl-carrier-protein] synthase III from Campylobacter fetus subsp. fetus (strain 82-40).